We begin with the raw amino-acid sequence, 336 residues long: MATAVGRLVLRRPGAGGGARWRFIATSPAAELSPTELTEMRNDLFNREKSRQLSLTPRTEKIEVKHVGKTDPGTVFVMNKNISTPYSCAMHLSEWYCSKSILALVDGQPWDMYKPLTKSCEIKFLTFKDPDPKEVNKAYWRSCAMMLGCVIERAFKDDYVVSLVRAPEVPVIAGAFCYDVTLDKRLDEWMPTKENLRSFTKDAHALIYRDLPFETLDVDARVALEIFQHNKYKVDFIEEKASQNPERIVKLHRIGDFIDVSEGPLIPRTSVCFQYEVSAVHNLNPSQPNLIRRFQGLSLPTHLRAQFTIWDKLVERSRKMVTEDEVRQTENTESTQ.

The TGS domain maps to 60–126 (EKIEVKHVGK…TKSCEIKFLT (67 aa)). Lys123 is modified (N6-acetyllysine).

This sequence belongs to the mitochondrion-specific ribosomal protein mL39 family. In terms of assembly, component of the mitochondrial ribosome large subunit (39S) which comprises a 16S rRNA and about 50 distinct proteins.

The protein localises to the mitochondrion. This Mus musculus (Mouse) protein is Large ribosomal subunit protein mL39 (Mrpl39).